The sequence spans 545 residues: Glucose-6-phosphate isomerase (545 aa).

The active-site Proton donor is glutamate 351. Residues histidine 382 and lysine 510 contribute to the active site.

The protein belongs to the GPI family.

It localises to the cytoplasm. It catalyses the reaction alpha-D-glucose 6-phosphate = beta-D-fructose 6-phosphate. It functions in the pathway carbohydrate biosynthesis; gluconeogenesis. It participates in carbohydrate degradation; glycolysis; D-glyceraldehyde 3-phosphate and glycerone phosphate from D-glucose: step 2/4. In terms of biological role, catalyzes the reversible isomerization of glucose-6-phosphate to fructose-6-phosphate. The sequence is that of Glucose-6-phosphate isomerase from Shewanella putrefaciens (strain CN-32 / ATCC BAA-453).